A 255-amino-acid polypeptide reads, in one-letter code: 3-oxoacyl-[acyl-carrier-protein] reductase MabA (255 aa).

NADP(+) is bound by residues 32-35 (NRGI), R55, 69-70 (DV), G98, Y161, K165, I194, and R205. Catalysis depends on Y161, which acts as the Proton acceptor.

The protein belongs to the short-chain dehydrogenases/reductases (SDR) family. As to quaternary structure, homotetramer.

The protein localises to the secreted. It localises to the cell wall. It carries out the reaction a (3R)-hydroxyacyl-[ACP] + NADP(+) = a 3-oxoacyl-[ACP] + NADPH + H(+). The enzyme catalyses a (3R)-3-hydroxyacyl-CoA + NADP(+) = a 3-oxoacyl-CoA + NADPH + H(+). It catalyses the reaction (3R)-3-hydroxybutanoyl-CoA + NADP(+) = acetoacetyl-CoA + NADPH + H(+). The catalysed reaction is (3R)-hydroxyoctanoyl-CoA + NADP(+) = 3-oxooctanoyl-CoA + NADPH + H(+). The protein operates within lipid metabolism; mycolic acid biosynthesis. Its function is as follows. Part of the mycobacterial fatty acid elongation system FAS-II, which is involved in mycolic acid biosynthesis. Catalyzes the NADPH-dependent reduction of beta-ketoacyl derivatives, the second step of the FAS-II elongation cycle. Has a preference for longer substrates. Can use CoA derivatives as substrates in vitro. The sequence is that of 3-oxoacyl-[acyl-carrier-protein] reductase MabA from Mycolicibacterium smegmatis (strain ATCC 700084 / mc(2)155) (Mycobacterium smegmatis).